The sequence spans 632 residues: Sporulenol synthase (632 aa).

Catalysis depends on Asp-377, which acts as the Proton donor. PFTB repeat units lie at residues 395-436, 465-505, and 513-554; these read WERG…EDAA, IQRA…HACG, and IQKA…VQTA.

Belongs to the terpene cyclase/mutase family.

The protein localises to the cell membrane. It carries out the reaction sporulenol = (R)-tetraprenyl-beta-curcumene + H2O. Its pathway is secondary metabolite biosynthesis; hopanoid biosynthesis. Its function is as follows. Catalyzes the cyclization of tetraprenyl beta-curcumene into sporulenol. This is Sporulenol synthase (sqhC) from Bacillus subtilis (strain 168).